The following is a 299-amino-acid chain: Coenzyme PQQ synthesis protein B (299 aa).

The protein belongs to the PqqB family.

Its pathway is cofactor biosynthesis; pyrroloquinoline quinone biosynthesis. In terms of biological role, may be involved in the transport of PQQ or its precursor to the periplasm. The protein is Coenzyme PQQ synthesis protein B of Xanthomonas campestris pv. campestris (strain 8004).